The primary structure comprises 264 residues: S-adenosylmethionine decarboxylase proenzyme (264 aa).

Catalysis depends on Ser-112, which acts as the Schiff-base intermediate with substrate; via pyruvic acid. Pyruvic acid (Ser); by autocatalysis is present on Ser-112. The Proton acceptor; for processing activity role is filled by His-117. Catalysis depends on Cys-140, which acts as the Proton donor; for catalytic activity.

The protein belongs to the prokaryotic AdoMetDC family. Type 2 subfamily. As to quaternary structure, heterooctamer of four alpha and four beta chains arranged as a tetramer of alpha/beta heterodimers. Pyruvate is required as a cofactor. Post-translationally, is synthesized initially as an inactive proenzyme. Formation of the active enzyme involves a self-maturation process in which the active site pyruvoyl group is generated from an internal serine residue via an autocatalytic post-translational modification. Two non-identical subunits are generated from the proenzyme in this reaction, and the pyruvate is formed at the N-terminus of the alpha chain, which is derived from the carboxyl end of the proenzyme. The post-translation cleavage follows an unusual pathway, termed non-hydrolytic serinolysis, in which the side chain hydroxyl group of the serine supplies its oxygen atom to form the C-terminus of the beta chain, while the remainder of the serine residue undergoes an oxidative deamination to produce ammonia and the pyruvoyl group blocking the N-terminus of the alpha chain.

The catalysed reaction is S-adenosyl-L-methionine + H(+) = S-adenosyl 3-(methylsulfanyl)propylamine + CO2. Its pathway is amine and polyamine biosynthesis; S-adenosylmethioninamine biosynthesis; S-adenosylmethioninamine from S-adenosyl-L-methionine: step 1/1. In terms of biological role, catalyzes the decarboxylation of S-adenosylmethionine to S-adenosylmethioninamine (dcAdoMet), the propylamine donor required for the synthesis of the polyamines spermine and spermidine from the diamine putrescine. This is S-adenosylmethionine decarboxylase proenzyme from Yersinia pseudotuberculosis serotype I (strain IP32953).